Reading from the N-terminus, the 180-residue chain is ATP-dependent protease subunit HslV (180 aa).

The active site involves Thr-7. Na(+) contacts are provided by Ala-164, Cys-167, and Thr-170.

This sequence belongs to the peptidase T1B family. HslV subfamily. A double ring-shaped homohexamer of HslV is capped on each side by a ring-shaped HslU homohexamer. The assembly of the HslU/HslV complex is dependent on binding of ATP.

The protein resides in the cytoplasm. It catalyses the reaction ATP-dependent cleavage of peptide bonds with broad specificity.. Its activity is regulated as follows. Allosterically activated by HslU binding. In terms of biological role, protease subunit of a proteasome-like degradation complex believed to be a general protein degrading machinery. In Brevibacillus brevis (strain 47 / JCM 6285 / NBRC 100599), this protein is ATP-dependent protease subunit HslV.